The primary structure comprises 101 residues: Acylphosphatase (101 aa).

Positions 15–101 (RMYARVYGLV…KGEFEDFETY (87 aa)) constitute an Acylphosphatase-like domain. Residues Arg-30 and Asn-48 contribute to the active site.

Belongs to the acylphosphatase family.

It catalyses the reaction an acyl phosphate + H2O = a carboxylate + phosphate + H(+). This Saccharolobus solfataricus (strain ATCC 35092 / DSM 1617 / JCM 11322 / P2) (Sulfolobus solfataricus) protein is Acylphosphatase (acyP).